Here is a 123-residue protein sequence, read N- to C-terminus: Small ribosomal subunit protein uS12 (123 aa).

D89 is modified (3-methylthioaspartic acid).

The protein belongs to the universal ribosomal protein uS12 family. Part of the 30S ribosomal subunit. Contacts proteins S8 and S17. May interact with IF1 in the 30S initiation complex.

With S4 and S5 plays an important role in translational accuracy. Its function is as follows. Interacts with and stabilizes bases of the 16S rRNA that are involved in tRNA selection in the A site and with the mRNA backbone. Located at the interface of the 30S and 50S subunits, it traverses the body of the 30S subunit contacting proteins on the other side and probably holding the rRNA structure together. The combined cluster of proteins S8, S12 and S17 appears to hold together the shoulder and platform of the 30S subunit. This is Small ribosomal subunit protein uS12 from Rhodopseudomonas palustris (strain BisA53).